A 431-amino-acid polypeptide reads, in one-letter code: Argininosuccinate lyase (431 aa).

It belongs to the lyase 1 family. Argininosuccinate lyase subfamily.

It is found in the cytoplasm. It catalyses the reaction 2-(N(omega)-L-arginino)succinate = fumarate + L-arginine. It participates in amino-acid biosynthesis; L-arginine biosynthesis; L-arginine from L-ornithine and carbamoyl phosphate: step 3/3. The polypeptide is Argininosuccinate lyase (Xanthomonas campestris pv. campestris (strain ATCC 33913 / DSM 3586 / NCPPB 528 / LMG 568 / P 25)).